The primary structure comprises 298 residues: MSLCVAPRHPTGAAAALGLGSLLVLLGPGRACPAGCACTDPHTVDCRDRGLPSVPDPFPLDVRKLLVAGNRIQQIPEDFFIFHGDLVYLDFRNNSLRSLEEGTFSGSGKLAFLDLSYNNLTQLGAGAFRSAGRLVKLSLANNHLAGVHEAAFESLESLQVLELNDNNLRSLNVAALDALPALRTVRLDGNPWLCDCDFAHLFSWIQENTSKLPKGLDAIQCSLPMEDRRVALRELSEASFSECKFSLSLTDLFIIIFSGVAVSIAAIISSFFLATVVQCFQRCAPNKDTEDEDDDEDD.

Positions 1–31 (MSLCVAPRHPTGAAAALGLGSLLVLLGPGRA) are cleaved as a signal peptide. 2 disulfides stabilise this stretch: Cys32-Cys38 and Cys36-Cys46. The region spanning 32–60 (CPAGCACTDPHTVDCRDRGLPSVPDPFPL) is the LRRNT domain. Residues 32–251 (CPAGCACTDP…ECKFSLSLTD (220 aa)) lie on the Extracellular side of the membrane. LRR repeat units lie at residues 61 to 82 (DVRKLLVAGNRIQQIPEDFFIF), 85 to 106 (DLVYLDFRNNSLRSLEEGTFSG), 109 to 130 (KLAFLDLSYNNLTQLGAGAFRS), 133 to 154 (RLVKLSLANNHLAGVHEAAFES), and 157 to 177 (SLQVLELNDNNLRSLNVAALD). Asn119 carries an N-linked (GlcNAc...) asparagine glycan. Positions 190–245 (NPWLCDCDFAHLFSWIQENTSKLPKGLDAIQCSLPMEDRRVALRELSEASFSECKF) constitute an LRRCT domain. Intrachain disulfides connect Cys194–Cys221 and Cys196–Cys243. A helical membrane pass occupies residues 252–272 (LFIIIFSGVAVSIAAIISSFF). Residues 273-298 (LATVVQCFQRCAPNKDTEDEDDDEDD) lie on the Cytoplasmic side of the membrane.

Interacts with KCNMA1.

Its subcellular location is the cell membrane. Auxiliary protein of the large-conductance, voltage and calcium-activated potassium channel (BK alpha). Modulates gating properties by producing a marked shift in the BK channel's voltage dependence of activation in the hyperpolarizing direction, and in the absence of calcium. The sequence is that of Leucine-rich repeat-containing protein 38 (Lrrc38) from Mus musculus (Mouse).